Here is a 217-residue protein sequence, read N- to C-terminus: MRLRKKWWARPEIEASDKFAEEPKELRGKWNKEFNNNNDIHLELGCGRGGFISQLVEKNKDINYVGIDLKDEVIVYAIRKVKEKEEEVKREFKNIRFVTMNIMGIAEVFDKNEISKIYINFCNPWPKEKHNKRRLTHTKLLTEYKKFLKPNTEIWFKTDDKELFEDSQEYFKESGFNIEYITYDLHNSDFKENIKTEYETKFETMGMKIMFLKARLL.

S-adenosyl-L-methionine-binding residues include Glu-43, Asp-68, Asn-101, and Asn-123. Lys-127 contacts substrate. The tract at residues 129 to 134 (KHNKRR) is interaction with RNA. Substrate is bound by residues Asp-159 and 196–199 (TEYE).

It belongs to the class I-like SAM-binding methyltransferase superfamily. TrmB family.

The enzyme catalyses guanosine(46) in tRNA + S-adenosyl-L-methionine = N(7)-methylguanosine(46) in tRNA + S-adenosyl-L-homocysteine. Its pathway is tRNA modification; N(7)-methylguanine-tRNA biosynthesis. In terms of biological role, catalyzes the formation of N(7)-methylguanine at position 46 (m7G46) in tRNA. The chain is tRNA (guanine-N(7)-)-methyltransferase from Clostridium botulinum (strain Okra / Type B1).